Consider the following 119-residue polypeptide: Protein YdaY (119 aa).

In Escherichia coli (strain K12), this protein is Protein YdaY (ydaY).